Reading from the N-terminus, the 575-residue chain is Transmembrane protein 108 (575 aa).

The helical transmembrane segment at 9 to 29 (YCQLLSFLLILALTEALAFAI) threads the bilayer. Residues 31–169 (EPSPRESLQV…TTTRRPPRPP (139 aa)) are interaction with SH3GL2. The segment at 65-398 (MLTPNPDGPP…PSRVSESTIS (334 aa)) is disordered. The segment covering 74–87 (PSQAAAPMATPTPR) has biased composition (low complexity). Polar residues predominate over residues 95–115 (HTISTIAATVTAPHSESSLST). Residues 146 to 160 (PPGATSRPTTAPPRT) are compositionally biased toward low complexity. An interaction with DST (isoform 1) region spans residues 173–407 (RKGAGNSSRP…SGAKEETVAT (235 aa)). Residues 244-271 (YSSSPQPQTVAATTVPSNTSWAPTTTSL) show a composition bias toward polar residues. Residues 290-318 (TFTSQGGTPDATAASGAPVSPQAAPVPSQ) show a composition bias toward low complexity. A compositionally biased stretch (polar residues) spans 329–352 (PSHSDSWLTVTPGTSRPLSTSSGV). Low complexity predominate over residues 353–366 (FTAATGPTPAAFDT). Residues 367–398 (SVSAPSQGIPQGASTTPQAPTHPSRVSESTIS) show a composition bias toward polar residues. The helical transmembrane segment at 469 to 489 (IAWVILAISVPISSCSVLLTV) threads the bilayer. The segment at 490–575 (CCMKRKKKTA…FVGNDQVSEI (86 aa)) is interaction with CYFIP2.

Interacts with DST (isoform 1). Interacts with SH3GL2. Interacts (via N-terminus) with CYFIP1 and CYFIP2; the interactions associate TMEM108 with the WAVE1 complex. In terms of processing, glycosylated.

Its subcellular location is the membrane. The protein resides in the postsynaptic density. It is found in the endosome membrane. It localises to the cell projection. The protein localises to the axon. Its subcellular location is the dendrite. The protein resides in the early endosome. Its function is as follows. Transmembrane protein required for proper cognitive functions. Involved in the development of dentate gyrus (DG) neuron circuitry, is necessary for AMPA receptors surface expression and proper excitatory postsynaptic currents of DG granule neurons. Regulates the organization and stability of the microtubule network of sensory neurons to allow axonal transport. Through the interaction with DST, mediates the docking of the dynein/dynactin motor complex to vesicle cargos for retrograde axonal transport. In hippocampal neurons, required for BDNF-dependent dendrite outgrowth. Cooperates with SH3GL2 and recruits the WAVE1 complex to facilitate actin-dependent BDNF:NTRK2 early endocytic trafficking and mediate signaling from early endosomes. This Homo sapiens (Human) protein is Transmembrane protein 108.